The following is a 257-amino-acid chain: Zinc transporter ZupT (257 aa).

8 helical membrane-spanning segments follow: residues 5–25, 32–52, 61–81, 109–129, 137–157, 171–191, 195–215, and 236–256; these read LILTLLAGAATFIGAFLGVLG, VLAFSLGFAAGIMLLISLMEM, GMSPVLGYGMFIIGLLGYFGL, AILLTLGISLHNFPEGIATFV, LGFGIALAVALHNIPEGLAVA, IFWAGISGMAEILGGVLAWLI, LVSPIVMAAIMAAVAGIMVAL, and GVLCGMSIMGLSLVILQTIGI. Positions 120 and 123 each coordinate Fe(2+). Residues glutamate 123 and histidine 148 each coordinate Zn(2+). The Fe(2+) site is built by asparagine 149, glutamate 152, and glutamate 181. Residue glutamate 152 coordinates Zn(2+).

It belongs to the ZIP transporter (TC 2.A.5) family. ZupT subfamily.

It is found in the cell inner membrane. The catalysed reaction is Zn(2+)(in) = Zn(2+)(out). Mediates zinc uptake. May also transport other divalent cations. This chain is Zinc transporter ZupT, found in Salmonella agona (strain SL483).